A 505-amino-acid polypeptide reads, in one-letter code: Light-independent protochlorophyllide reductase subunit B (505 aa).

[4Fe-4S] cluster is bound at residue D36. D291 (proton donor) is an active-site residue. Substrate is bound at residue 426 to 427 (GM).

The protein belongs to the ChlB/BchB/BchZ family. As to quaternary structure, protochlorophyllide reductase is composed of three subunits; ChlL, ChlN and ChlB. Forms a heterotetramer of two ChlB and two ChlN subunits. It depends on [4Fe-4S] cluster as a cofactor.

It carries out the reaction chlorophyllide a + oxidized 2[4Fe-4S]-[ferredoxin] + 2 ADP + 2 phosphate = protochlorophyllide a + reduced 2[4Fe-4S]-[ferredoxin] + 2 ATP + 2 H2O. Its pathway is porphyrin-containing compound metabolism; chlorophyll biosynthesis (light-independent). In terms of biological role, component of the dark-operative protochlorophyllide reductase (DPOR) that uses Mg-ATP and reduced ferredoxin to reduce ring D of protochlorophyllide (Pchlide) to form chlorophyllide a (Chlide). This reaction is light-independent. The NB-protein (ChlN-ChlB) is the catalytic component of the complex. The sequence is that of Light-independent protochlorophyllide reductase subunit B from Gloeobacter violaceus (strain ATCC 29082 / PCC 7421).